We begin with the raw amino-acid sequence, 310 residues long: UDP-N-acetylenolpyruvoylglucosamine reductase (310 aa).

The 166-residue stretch at 27–192 (KIGGKARYIV…LKATFRLQYA (166 aa)) folds into the FAD-binding PCMH-type domain. Arg-171 is an active-site residue. Ser-223 (proton donor) is an active-site residue. Glu-293 is a catalytic residue.

This sequence belongs to the MurB family. FAD serves as cofactor.

The protein localises to the cytoplasm. It catalyses the reaction UDP-N-acetyl-alpha-D-muramate + NADP(+) = UDP-N-acetyl-3-O-(1-carboxyvinyl)-alpha-D-glucosamine + NADPH + H(+). Its pathway is cell wall biogenesis; peptidoglycan biosynthesis. In terms of biological role, cell wall formation. This chain is UDP-N-acetylenolpyruvoylglucosamine reductase, found in Caldicellulosiruptor saccharolyticus (strain ATCC 43494 / DSM 8903 / Tp8T 6331).